Reading from the N-terminus, the 479-residue chain is Arf-GAP domain and FG repeat-containing protein 2 (479 aa).

An Arf-GAP domain is found at 27 to 153; it reads EVWCRRVREL…WYVPPEQVKG (127 aa). The C4-type zinc-finger motif lies at 47 to 70; it reads CFECAQRGVTYVDITVGSFVCTTC. Disordered stretches follow at residues 150 to 223 and 450 to 479; these read QVKG…TKKA and LSQP…NPFL. A compositionally biased stretch (polar residues) spans 157 to 167; the sequence is SKGSVSATPVQ. Lysine 174 is subject to N6-acetyllysine. Over residues 194–218 the composition is skewed to low complexity; it reads SSQPGSQSQARSSSQARSSQPPSHS. The span at 454–479 shows a compositional bias: polar residues; it reads AGISTNPFMTGSSAFASKPPTTNPFL.

Interacts with EPS15R.

The polypeptide is Arf-GAP domain and FG repeat-containing protein 2 (Agfg2) (Mus musculus (Mouse)).